The chain runs to 298 residues: DNA-3-methyladenine glycosylase (298 aa).

A mitochondrion-targeting transit peptide spans 1-17 (MVTPALQMKKPKQFCRR). Residues 1–65 (MVTPALQMKK…CPRERCLGPP (65 aa)) form a disordered region. Residues 9 to 25 (KKPKQFCRRMGQKKQRP) are compositionally biased toward basic residues. A phosphoserine mark is found at serine 78 and serine 252.

The protein belongs to the DNA glycosylase MPG family. As to quaternary structure, binds MBD1. Binds SSBP1.

It localises to the cytoplasm. It is found in the mitochondrion matrix. Its subcellular location is the mitochondrion nucleoid. The protein localises to the nucleus. It carries out the reaction Hydrolysis of alkylated DNA, releasing 3-methyladenine, 3-methylguanine, 7-methylguanine and 7-methyladenine.. Binding to SSBP1 in mitochondria inhibits glycosylase activity in the context of a single-stranded DNA (ssDNA), but not a double-stranded DNA (dsDNA) substrates. In terms of biological role, hydrolysis of the deoxyribose N-glycosidic bond to excise 3-methyladenine, and 7-methylguanine from the damaged DNA polymer formed by alkylation lesions. This Homo sapiens (Human) protein is DNA-3-methyladenine glycosylase (MPG).